Here is a 319-residue protein sequence, read N- to C-terminus: Ribonuclease Z (319 aa).

The Zn(2+) site is built by histidine 62, histidine 64, aspartate 66, histidine 67, histidine 139, aspartate 209, and histidine 268. Aspartate 66 acts as the Proton acceptor in catalysis.

Belongs to the RNase Z family. In terms of assembly, homodimer. The cofactor is Zn(2+).

The catalysed reaction is Endonucleolytic cleavage of RNA, removing extra 3' nucleotides from tRNA precursor, generating 3' termini of tRNAs. A 3'-hydroxy group is left at the tRNA terminus and a 5'-phosphoryl group is left at the trailer molecule.. Its function is as follows. Zinc phosphodiesterase, which displays some tRNA 3'-processing endonuclease activity. Probably involved in tRNA maturation, by removing a 3'-trailer from precursor tRNA. This chain is Ribonuclease Z, found in Pseudomonas putida (strain ATCC 47054 / DSM 6125 / CFBP 8728 / NCIMB 11950 / KT2440).